Consider the following 532-residue polypeptide: Tyrosine-protein kinase Src-1 (532 aa).

Residues 1-52 (MGATKSKPREGGPRSRSLDIVEGSHQPFTSLSASQTPNKSLDSHRPPAQPFG) form a disordered region. Gly-2 is lipidated: N-myristoyl glycine. A compositionally biased stretch (basic and acidic residues) spans 7–19 (KPREGGPRSRSLD). Residues 26-40 (QPFTSLSASQTPNKS) are compositionally biased toward polar residues. The region spanning 80 to 141 (GGVTTFVALY…PSNYVAPSDS (62 aa)) is the SH3 domain. The region spanning 147 to 244 (WYLGKITRRE…GLCHRLTTVC (98 aa)) is the SH2 domain. The Protein kinase domain maps to 266–519 (LRLELKLGQG…YLQAFLEDYF (254 aa)). ATP-binding positions include 272-280 (LGQGCFGEV) and Lys-294. Asp-385 acts as the Proton acceptor in catalysis. The residue at position 415 (Tyr-415) is a Phosphotyrosine; by autocatalysis.

It belongs to the protein kinase superfamily. Tyr protein kinase family. SRC subfamily.

Its subcellular location is the cell membrane. The enzyme catalyses L-tyrosyl-[protein] + ATP = O-phospho-L-tyrosyl-[protein] + ADP + H(+). This Xenopus laevis (African clawed frog) protein is Tyrosine-protein kinase Src-1 (src-a).